A 130-amino-acid polypeptide reads, in one-letter code: S-adenosylmethionine decarboxylase proenzyme (130 aa).

The Schiff-base intermediate with substrate; via pyruvic acid role is filled by S63. Position 63 is a pyruvic acid (Ser); by autocatalysis (S63). H68 serves as the catalytic Proton acceptor; for processing activity. C83 acts as the Proton donor; for catalytic activity in catalysis.

The protein belongs to the prokaryotic AdoMetDC family. Type 1 subfamily. Heterotetramer of two alpha and two beta chains arranged as a dimer of alpha/beta heterodimers. It depends on pyruvate as a cofactor. Post-translationally, is synthesized initially as an inactive proenzyme. Formation of the active enzyme involves a self-maturation process in which the active site pyruvoyl group is generated from an internal serine residue via an autocatalytic post-translational modification. Two non-identical subunits are generated from the proenzyme in this reaction, and the pyruvate is formed at the N-terminus of the alpha chain, which is derived from the carboxyl end of the proenzyme. The post-translation cleavage follows an unusual pathway, termed non-hydrolytic serinolysis, in which the side chain hydroxyl group of the serine supplies its oxygen atom to form the C-terminus of the beta chain, while the remainder of the serine residue undergoes an oxidative deamination to produce ammonia and the pyruvoyl group blocking the N-terminus of the alpha chain.

It catalyses the reaction S-adenosyl-L-methionine + H(+) = S-adenosyl 3-(methylsulfanyl)propylamine + CO2. Its pathway is amine and polyamine biosynthesis; S-adenosylmethioninamine biosynthesis; S-adenosylmethioninamine from S-adenosyl-L-methionine: step 1/1. Its function is as follows. Catalyzes the decarboxylation of S-adenosylmethionine to S-adenosylmethioninamine (dcAdoMet), the propylamine donor required for the synthesis of the polyamines spermine and spermidine from the diamine putrescine. The polypeptide is S-adenosylmethionine decarboxylase proenzyme (Thermotoga petrophila (strain ATCC BAA-488 / DSM 13995 / JCM 10881 / RKU-1)).